We begin with the raw amino-acid sequence, 90 residues long: Small ribosomal subunit protein bS16 (90 aa).

Belongs to the bacterial ribosomal protein bS16 family.

This chain is Small ribosomal subunit protein bS16, found in Bacillus pumilus (strain SAFR-032).